A 242-amino-acid chain; its full sequence is Endoglucanase-5 (242 aa).

An N-terminal signal peptide occupies residues 1 to 17 (MKATLVLGSLIVGAVSA). Residues 18–182 (YKATTTRYYD…ETDPTPVLGN (165 aa)) are catalytic. Asp-27 acts as the Nucleophile in catalysis. Asp-134 acts as the Proton donor in catalysis. The interval 177-206 (TPVLGNDTGSTPPGSSPPATSSSPPSGGGQ) is disordered. N-linked (GlcNAc...) asparagine glycosylation occurs at Asn-182. The span at 184-201 (TGSTPPGSSPPATSSSPP) shows a compositional bias: low complexity. The 37-residue stretch at 205-241 (GQQTLYGQCGGAGWTGPTTCQAPGTCKVQNQWYSQCL) folds into the CBM1 domain. 2 disulfides stabilise this stretch: Cys-213–Cys-230 and Cys-224–Cys-240.

It belongs to the glycosyl hydrolase 45 (cellulase K) family.

The catalysed reaction is Endohydrolysis of (1-&gt;4)-beta-D-glucosidic linkages in cellulose, lichenin and cereal beta-D-glucans.. In Hypocrea jecorina (Trichoderma reesei), this protein is Endoglucanase-5 (egl5).